Consider the following 146-residue polypeptide: MIF-like protein mif-3 (146 aa).

This sequence belongs to the MIF family.

The chain is MIF-like protein mif-3 (mif-3) from Caenorhabditis elegans.